Reading from the N-terminus, the 95-residue chain is Aspartyl/glutamyl-tRNA(Asn/Gln) amidotransferase subunit C (95 aa).

It belongs to the GatC family. In terms of assembly, heterotrimer of A, B and C subunits.

The enzyme catalyses L-glutamyl-tRNA(Gln) + L-glutamine + ATP + H2O = L-glutaminyl-tRNA(Gln) + L-glutamate + ADP + phosphate + H(+). It catalyses the reaction L-aspartyl-tRNA(Asn) + L-glutamine + ATP + H2O = L-asparaginyl-tRNA(Asn) + L-glutamate + ADP + phosphate + 2 H(+). Allows the formation of correctly charged Asn-tRNA(Asn) or Gln-tRNA(Gln) through the transamidation of misacylated Asp-tRNA(Asn) or Glu-tRNA(Gln) in organisms which lack either or both of asparaginyl-tRNA or glutaminyl-tRNA synthetases. The reaction takes place in the presence of glutamine and ATP through an activated phospho-Asp-tRNA(Asn) or phospho-Glu-tRNA(Gln). This chain is Aspartyl/glutamyl-tRNA(Asn/Gln) amidotransferase subunit C, found in Hydrogenovibrio crunogenus (strain DSM 25203 / XCL-2) (Thiomicrospira crunogena).